The following is a 142-amino-acid chain: ATP synthase epsilon chain (142 aa).

This sequence belongs to the ATPase epsilon chain family. F-type ATPases have 2 components, CF(1) - the catalytic core - and CF(0) - the membrane proton channel. CF(1) has five subunits: alpha(3), beta(3), gamma(1), delta(1), epsilon(1). CF(0) has three main subunits: a, b and c.

The protein resides in the cell inner membrane. Its function is as follows. Produces ATP from ADP in the presence of a proton gradient across the membrane. The chain is ATP synthase epsilon chain from Shewanella piezotolerans (strain WP3 / JCM 13877).